A 196-amino-acid polypeptide reads, in one-letter code: dTTP/UTP pyrophosphatase (196 aa).

Asp-73 functions as the Proton acceptor in the catalytic mechanism.

Belongs to the Maf family. YhdE subfamily. The cofactor is a divalent metal cation.

Its subcellular location is the cytoplasm. The catalysed reaction is dTTP + H2O = dTMP + diphosphate + H(+). It catalyses the reaction UTP + H2O = UMP + diphosphate + H(+). Nucleoside triphosphate pyrophosphatase that hydrolyzes dTTP and UTP. May have a dual role in cell division arrest and in preventing the incorporation of modified nucleotides into cellular nucleic acids. This Myxococcus xanthus (strain DK1622) protein is dTTP/UTP pyrophosphatase.